We begin with the raw amino-acid sequence, 320 residues long: Endochitinase (320 aa).

An N-terminal signal peptide occupies residues 1–23 (MKRTLKVSFFILCLLPLFLGSKA). The Chitin-binding type-1 domain maps to 24 to 64 (EQCGSQAGGAVCPNGLCCSKFGFCGSTDPYCGDGCQSQCKS). 7 disulfides stabilise this stretch: Cys26–Cys41, Cys35–Cys47, Cys40–Cys54, Cys58–Cys62, Cys101–Cys163, Cys175–Cys182, and Cys281–Cys313. The active-site Proton donor is Glu145.

This sequence belongs to the glycosyl hydrolase 19 family. Chitinase class I subfamily.

It catalyses the reaction Random endo-hydrolysis of N-acetyl-beta-D-glucosaminide (1-&gt;4)-beta-linkages in chitin and chitodextrins.. In terms of biological role, defense against chitin-containing fungal pathogens. In Pisum sativum (Garden pea), this protein is Endochitinase.